Consider the following 177-residue polypeptide: Alkyl hydroperoxide reductase AhpD (177 aa).

C133 (proton donor) is an active-site residue. Cysteines 133 and 136 form a disulfide. The active-site Cysteine sulfenic acid (-SOH) intermediate is the C136.

It belongs to the AhpD family.

It catalyses the reaction N(6)-[(R)-dihydrolipoyl]-L-lysyl-[lipoyl-carrier protein] + a hydroperoxide = N(6)-[(R)-lipoyl]-L-lysyl-[lipoyl-carrier protein] + an alcohol + H2O. In terms of biological role, antioxidant protein with alkyl hydroperoxidase activity. Required for the reduction of the AhpC active site cysteine residues and for the regeneration of the AhpC enzyme activity. This chain is Alkyl hydroperoxide reductase AhpD, found in Coxiella burnetii (strain CbuG_Q212) (Coxiella burnetii (strain Q212)).